Here is a 161-residue protein sequence, read N- to C-terminus: Cyclic pyranopterin monophosphate synthase (161 aa).

Substrate contacts are provided by residues 75–77 (LCH) and 113–114 (ME). Residue Asp128 is part of the active site.

Belongs to the MoaC family. In terms of assembly, homohexamer; trimer of dimers.

It carries out the reaction (8S)-3',8-cyclo-7,8-dihydroguanosine 5'-triphosphate = cyclic pyranopterin phosphate + diphosphate. It participates in cofactor biosynthesis; molybdopterin biosynthesis. Functionally, catalyzes the conversion of (8S)-3',8-cyclo-7,8-dihydroguanosine 5'-triphosphate to cyclic pyranopterin monophosphate (cPMP). This is Cyclic pyranopterin monophosphate synthase from Shigella sonnei (strain Ss046).